A 235-amino-acid chain; its full sequence is Lipoprotein-releasing system ATP-binding protein LolD 1 (235 aa).

The 230-residue stretch at 5-234 (FEARGITKSY…DGRLQLCTPL (230 aa)) folds into the ABC transporter domain. 42–49 (GASGSGKT) contributes to the ATP binding site.

It belongs to the ABC transporter superfamily. Lipoprotein translocase (TC 3.A.1.125) family. The complex is composed of two ATP-binding proteins (LolD) and two transmembrane proteins (LolC and LolE).

It is found in the cell inner membrane. Part of the ABC transporter complex LolCDE involved in the translocation of mature outer membrane-directed lipoproteins, from the inner membrane to the periplasmic chaperone, LolA. Responsible for the formation of the LolA-lipoprotein complex in an ATP-dependent manner. The chain is Lipoprotein-releasing system ATP-binding protein LolD 1 from Chlorobium luteolum (strain DSM 273 / BCRC 81028 / 2530) (Pelodictyon luteolum).